Consider the following 241-residue polypeptide: MKNIDNPSEKIIIALDGMDKDDVVNLLKKIPEIVWVKVGLELFVSEGPDVLSMLREKGKKIFLDLKFHDIPTTVARACFAASQTGAEFISLHTCAGMKALKMANEAAKEGAAKVNLIPPKLLGITILTSWTRESFCNDLLINQSINQRVKHLAEIASNSGLGGCVCSPKEVQFLRESYPETFELITPGIRSLGSNINDQSRVSDASEAIKMGASKLVIGRAITQSNDSAYMFKSFCDKISI.

Substrate-binding positions include Asp16, Lys37, 64 to 73 (DLKFHDIPTT), Thr128, Arg190, Gln199, Gly219, and Arg220. Catalysis depends on Lys66, which acts as the Proton donor.

It belongs to the OMP decarboxylase family. Type 1 subfamily. As to quaternary structure, homodimer.

It catalyses the reaction orotidine 5'-phosphate + H(+) = UMP + CO2. The protein operates within pyrimidine metabolism; UMP biosynthesis via de novo pathway; UMP from orotate: step 2/2. Its function is as follows. Catalyzes the decarboxylation of orotidine 5'-monophosphate (OMP) to uridine 5'-monophosphate (UMP). In Prochlorococcus marinus (strain NATL2A), this protein is Orotidine 5'-phosphate decarboxylase.